The sequence spans 614 residues: Zinc metalloproteinase-disintegrin-like BmMP (614 aa).

The first 20 residues, 1–20 (MIQALLVTICLAVFPYQGSS), serve as a signal peptide directing secretion. Positions 21 to 188 (IILESGNVND…WESDEPIRNA (168 aa)) are excised as a propeptide. Asn-187 carries N-linked (GlcNAc...) asparagine glycosylation. The region spanning 205 to 401 (KYIEFYVAVD…DRPQCILNKP (197 aa)) is the Peptidase M12B domain. 17 disulfides stabilise this stretch: Cys-316-Cys-396, Cys-356-Cys-380, Cys-359-Cys-364, Cys-412-Cys-441, Cys-423-Cys-436, Cys-425-Cys-431, Cys-435-Cys-458, Cys-449-Cys-455, Cys-454-Cys-480, Cys-467-Cys-487, Cys-474-Cys-506, Cys-499-Cys-511, Cys-518-Cys-568, Cys-533-Cys-576, Cys-546-Cys-556, Cys-563-Cys-602, and Cys-596-Cys-607. Residue His-341 participates in Zn(2+) binding. Glu-342 is a catalytic residue. 2 residues coordinate Zn(2+): His-345 and His-351. In terms of domain architecture, Disintegrin spans 409 to 495 (PAICGNYFVE…ECPTDIFRRN (87 aa)). The D/ECD-tripeptide signature appears at 473–475 (DCD).

This sequence belongs to the venom metalloproteinase (M12B) family. P-III subfamily. P-IIIa sub-subfamily. Monomer. Zn(2+) serves as cofactor. Expressed by the venom gland.

It localises to the secreted. Functionally, snake venom zinc metalloproteinase that inhibits platelet aggregation and degrades fibrinogen. In Bungarus multicinctus (Many-banded krait), this protein is Zinc metalloproteinase-disintegrin-like BmMP.